A 173-amino-acid polypeptide reads, in one-letter code: RNA polymerase sigma factor YlaC (173 aa).

The protein belongs to the sigma-70 factor family. ECF subfamily.

In terms of biological role, sigma factors are initiation factors that promote the attachment of RNA polymerase to specific initiation sites and are then released. This sigma factor contributes to oxidative stress resistance. This chain is RNA polymerase sigma factor YlaC (ylaC), found in Bacillus subtilis (strain 168).